The primary structure comprises 218 residues: Elongation factor Ts (218 aa).

An involved in Mg(2+) ion dislocation from EF-Tu region spans residues 82 to 85 (TDFV).

This sequence belongs to the EF-Ts family.

It is found in the cytoplasm. In terms of biological role, associates with the EF-Tu.GDP complex and induces the exchange of GDP to GTP. It remains bound to the aminoacyl-tRNA.EF-Tu.GTP complex up to the GTP hydrolysis stage on the ribosome. The chain is Elongation factor Ts from Picosynechococcus sp. (strain ATCC 27264 / PCC 7002 / PR-6) (Agmenellum quadruplicatum).